A 1267-amino-acid polypeptide reads, in one-letter code: Probable cation-transporting ATPase catp-6 (1267 aa).

The Extracellular segment spans residues M1–R32. A helical membrane pass occupies residues T33–W53. Over K54 to P189 the chain is Cytoplasmic. Residues I190–V210 traverse the membrane as a helical segment. Residues T211 to E217 lie on the Extracellular side of the membrane. The helical transmembrane segment at Y218–Y238 threads the bilayer. Residues Q239–K390 are Cytoplasmic-facing. Residues F391–I411 form a helical membrane-spanning segment. Residues M412–S424 are Extracellular-facing. A helical transmembrane segment spans residues L425 to I445. The Cytoplasmic portion of the chain corresponds to N446–M950. The active-site 4-aspartylphosphate intermediate is the D476. Mg(2+)-binding residues include D891 and D895. A helical transmembrane segment spans residues A951–L971. The Extracellular portion of the chain corresponds to T972–F976. The helical transmembrane segment at M977 to F997 threads the bilayer. Residues Y998–A1013 lie on the Cytoplasmic side of the membrane. A helical transmembrane segment spans residues S1014–F1034. Topologically, residues S1035–S1058 are extracellular. The helical transmembrane segment at M1059–Y1079 threads the bilayer. Topologically, residues S1080–A1097 are cytoplasmic. A helical transmembrane segment spans residues L1098 to L1118. Over K1119–R1132 the chain is Extracellular. The helical transmembrane segment at I1133–F1153 threads the bilayer. Topologically, residues V1154–Y1267 are cytoplasmic. The disordered stretch occupies residues E1232–E1256.

The protein belongs to the cation transport ATPase (P-type) (TC 3.A.3) family. Type V subfamily.

It localises to the membrane. The enzyme catalyses ATP + H2O = ADP + phosphate + H(+). This is Probable cation-transporting ATPase catp-6 from Caenorhabditis elegans.